Here is a 500-residue protein sequence, read N- to C-terminus: NAD(P)H-quinone oxidoreductase chain 4, chloroplastic (500 aa).

14 consecutive transmembrane segments (helical) span residues 4-24 (FPWLTIIVVFPILTGSLIFLL), 37-57 (LCICILELLLTTYTFCYHFQL), 87-107 (IGPILLTGFITTLATLAAWPV), 111-131 (AQLFHFLMLAMYSGQIGSFSS), 134-154 (LLLFFLMWEFELIPVYLLLSM), 167-187 (FILYTAGGSIFLLIGVLGIGL), 208-228 (ALEVIFYVGFLIAFAVKLPII), 242-262 (HYSTCMLLAGILLKMGAYGLV), 272-292 (AHCLFSPGLIIVGAIQIIYAA), 305-325 (IAYSSISHMGFIIIGIGSLSD), 330-350 (GAILQIISHGFIGAALFFLAG), 386-406 (LALPGLSGFVAELLVFFGIIT), 416-436 (ILIAFLMAIGMILTPIYSLSM), and 462-482 (LFVSISLLLPIIGIGIYPDFV).

This sequence belongs to the complex I subunit 4 family.

The protein resides in the plastid. It localises to the chloroplast thylakoid membrane. The catalysed reaction is a plastoquinone + NADH + (n+1) H(+)(in) = a plastoquinol + NAD(+) + n H(+)(out). The enzyme catalyses a plastoquinone + NADPH + (n+1) H(+)(in) = a plastoquinol + NADP(+) + n H(+)(out). The protein is NAD(P)H-quinone oxidoreductase chain 4, chloroplastic of Oenothera biennis (German evening primrose).